We begin with the raw amino-acid sequence, 314 residues long: PDZ domain-containing protein GIPC2 (314 aa).

Positions Met-1–Ala-12 are enriched in basic residues. The disordered stretch occupies residues Met-1–Pro-36. The span at Lys-13–Arg-25 shows a compositional bias: basic and acidic residues. The PDZ domain maps to Glu-117–Glu-197.

This sequence belongs to the GIPC family. As to quaternary structure, probably interacts with SEMA5A.

Its subcellular location is the cytoplasm. In Rattus norvegicus (Rat), this protein is PDZ domain-containing protein GIPC2 (Gipc2).